The primary structure comprises 148 residues: 3-dehydroquinate dehydratase (148 aa).

Residue tyrosine 26 is the Proton acceptor of the active site. The substrate site is built by asparagine 77, histidine 83, and aspartate 90. Histidine 103 (proton donor) is an active-site residue. Substrate contacts are provided by residues 104 to 105 (LS) and arginine 114.

The protein belongs to the type-II 3-dehydroquinase family. As to quaternary structure, homododecamer.

It carries out the reaction 3-dehydroquinate = 3-dehydroshikimate + H2O. It participates in metabolic intermediate biosynthesis; chorismate biosynthesis; chorismate from D-erythrose 4-phosphate and phosphoenolpyruvate: step 3/7. Its function is as follows. Catalyzes a trans-dehydration via an enolate intermediate. The polypeptide is 3-dehydroquinate dehydratase (Chlorobaculum tepidum (strain ATCC 49652 / DSM 12025 / NBRC 103806 / TLS) (Chlorobium tepidum)).